A 461-amino-acid polypeptide reads, in one-letter code: L-seryl-tRNA(Sec) selenium transferase (461 aa).

An N6-(pyridoxal phosphate)lysine modification is found at Lys294.

It belongs to the SelA family. Pyridoxal 5'-phosphate serves as cofactor.

It localises to the cytoplasm. The enzyme catalyses L-seryl-tRNA(Sec) + selenophosphate + H(+) = L-selenocysteinyl-tRNA(Sec) + phosphate. It functions in the pathway aminoacyl-tRNA biosynthesis; selenocysteinyl-tRNA(Sec) biosynthesis; selenocysteinyl-tRNA(Sec) from L-seryl-tRNA(Sec) (bacterial route): step 1/1. Converts seryl-tRNA(Sec) to selenocysteinyl-tRNA(Sec) required for selenoprotein biosynthesis. The protein is L-seryl-tRNA(Sec) selenium transferase of Actinobacillus pleuropneumoniae serotype 5b (strain L20).